The sequence spans 125 residues: MIYDFKAEIIKSKSSSSSKSGAHHWLLQRVTGVVLALCSFWLIYFMFTNKNNDINIIMWEFKKPFNIVILLITVTISLYHSVLGMRVVIEDYINCHKLRNTLIIIVKLFCILTIVAFIVAIFYSE.

Topologically, residues 1–24 (MIYDFKAEIIKSKSSSSSKSGAHH) are cytoplasmic. The helical transmembrane segment at 25–45 (WLLQRVTGVVLALCSFWLIYF) threads the bilayer. The Periplasmic portion of the chain corresponds to 46–67 (MFTNKNNDINIIMWEFKKPFNI). The chain crosses the membrane as a helical span at residues 68–89 (VILLITVTISLYHSVLGMRVVI). Heme is bound at residue histidine 80. Residues 90-99 (EDYINCHKLR) lie on the Cytoplasmic side of the membrane. Tyrosine 92 is a binding site for a ubiquinone. The helical transmembrane segment at 100 to 123 (NTLIIIVKLFCILTIVAFIVAIFY) threads the bilayer.

In terms of assembly, part of an enzyme complex containing four subunits: a flavoprotein, an iron-sulfur protein, plus two membrane-anchoring proteins, SdhC and SdhD. The cofactor is heme.

It is found in the cell inner membrane. Its pathway is carbohydrate metabolism; tricarboxylic acid cycle. Membrane-anchoring subunit of succinate dehydrogenase (SDH). The chain is Succinate dehydrogenase hydrophobic membrane anchor subunit (sdhD) from Rickettsia typhi (strain ATCC VR-144 / Wilmington).